Here is a 506-residue protein sequence, read N- to C-terminus: AMP phosphorylase (506 aa).

AMP-binding positions include glycine 167, serine 193–glycine 198, and threonine 202. Aspartate 255 (proton donor) is an active-site residue. Residues serine 263 and lysine 287 each coordinate AMP.

This sequence belongs to the thymidine/pyrimidine-nucleoside phosphorylase family. Type 2 subfamily.

The enzyme catalyses AMP + phosphate = alpha-D-ribose 1,5-bisphosphate + adenine. It catalyses the reaction CMP + phosphate = cytosine + alpha-D-ribose 1,5-bisphosphate. It carries out the reaction UMP + phosphate = alpha-D-ribose 1,5-bisphosphate + uracil. Its function is as follows. Catalyzes the conversion of AMP and phosphate to adenine and ribose 1,5-bisphosphate (R15P). Exhibits phosphorylase activity toward CMP and UMP in addition to AMP. Functions in an archaeal AMP degradation pathway, together with R15P isomerase and RubisCO. The protein is AMP phosphorylase of Methanosarcina barkeri (strain Fusaro / DSM 804).